The chain runs to 116 residues: Spexin (116 aa).

Residues 1 to 26 (MKGFKSLVVMTLTLFLVFSFMGNCNS) form the signal peptide. A propeptide spanning residues 27-35 (APQRLFERR) is cleaved from the precursor. Residue glutamine 49 is modified to Glutamine amide. 2 propeptides span residues 50-116 (GRRF…LLNW) and 74-116 (PNSQ…LLNW). The segment covering 53–73 (FLSDQSRRKDLSDRPPLERRS) has biased composition (basic and acidic residues). The interval 53-80 (FLSDQSRRKDLSDRPPLERRSPNSQQLT) is disordered.

Belongs to the spexin family.

The protein resides in the secreted. Its subcellular location is the extracellular space. It localises to the cytoplasmic vesicle. The protein localises to the secretory vesicle. Plays a role as a central modulator of cardiovascular and renal function and nociception. Also plays a role in energy metabolism and storage. Inhibits adrenocortical cell proliferation with minor stimulation on corticosteroid release. Its function is as follows. Acts as a ligand for galanin receptors GALR2 and GALR3. Intracerebroventricular administration of the peptide induces an increase in arterial blood pressure, a decrease in both heart rate and renal excretion and delayed natriuresis. Intraventricular administration of the peptide induces antinociceptive activity. Also induces contraction of muscarinic-like stomach smooth muscles. Intraperitoneal administration of the peptide induces a reduction in food consumption and body weight. Inhibits long chain fatty acid uptake into adipocytes. In terms of biological role, intracerebroventricular administration of the peptide induces a decrease in heart rate, but no change in arterial pressure, and an increase in urine flow rate. Intraventricular administration of the peptide induces antinociceptive activity. The polypeptide is Spexin (SPX) (Bos taurus (Bovine)).